Reading from the N-terminus, the 79-residue chain is Acyl carrier protein (79 aa).

The 76-residue stretch at 2–77 (DNIEQRVKKI…QAIDYATAHV (76 aa)) folds into the Carrier domain. Ser-37 is subject to O-(pantetheine 4'-phosphoryl)serine.

This sequence belongs to the acyl carrier protein (ACP) family. 4'-phosphopantetheine is transferred from CoA to a specific serine of apo-ACP by AcpS. This modification is essential for activity because fatty acids are bound in thioester linkage to the sulfhydryl of the prosthetic group.

It is found in the cytoplasm. It participates in lipid metabolism; fatty acid biosynthesis. Carrier of the growing fatty acid chain in fatty acid biosynthesis. The chain is Acyl carrier protein from Cupriavidus pinatubonensis (strain JMP 134 / LMG 1197) (Cupriavidus necator (strain JMP 134)).